Here is a 268-residue protein sequence, read N- to C-terminus: Tryptophan synthase alpha chain (268 aa).

Active-site proton acceptor residues include Glu49 and Asp60.

The protein belongs to the TrpA family. Tetramer of two alpha and two beta chains.

It carries out the reaction (1S,2R)-1-C-(indol-3-yl)glycerol 3-phosphate + L-serine = D-glyceraldehyde 3-phosphate + L-tryptophan + H2O. The protein operates within amino-acid biosynthesis; L-tryptophan biosynthesis; L-tryptophan from chorismate: step 5/5. Its function is as follows. The alpha subunit is responsible for the aldol cleavage of indoleglycerol phosphate to indole and glyceraldehyde 3-phosphate. The polypeptide is Tryptophan synthase alpha chain (Xanthomonas euvesicatoria pv. vesicatoria (strain 85-10) (Xanthomonas campestris pv. vesicatoria)).